Here is a 279-residue protein sequence, read N- to C-terminus: Dihydropteroate synthase type-1 (279 aa).

The 258-residue stretch at 1–258 (MVTVFGILNL…APGDLRSAIT (258 aa)) folds into the Pterin-binding domain. Residue Asn9 participates in Mg(2+) binding. (7,8-dihydropterin-6-yl)methyl diphosphate-binding positions include Asp82, Asn101, Asp173, Lys212, and 246 to 248 (RTH).

The protein belongs to the DHPS family. In terms of assembly, homodimer or homotrimer. Requires Mg(2+) as cofactor.

It catalyses the reaction (7,8-dihydropterin-6-yl)methyl diphosphate + 4-aminobenzoate = 7,8-dihydropteroate + diphosphate. Its pathway is cofactor biosynthesis; tetrahydrofolate biosynthesis; 7,8-dihydrofolate from 2-amino-4-hydroxy-6-hydroxymethyl-7,8-dihydropteridine diphosphate and 4-aminobenzoate: step 1/2. Catalyzes the condensation of para-aminobenzoate (pABA) with 6-hydroxymethyl-7,8-dihydropterin diphosphate (DHPt-PP) to form 7,8-dihydropteroate (H2Pte), the immediate precursor of folate derivatives. The sequence is that of Dihydropteroate synthase type-1 (sulI) from Corynebacterium glutamicum (Brevibacterium saccharolyticum).